The chain runs to 239 residues: Prolyl hydroxylase EGLN3 (239 aa).

A beta(2)beta(3) 'finger-like' loop region spans residues 62 to 73; the sequence is AGPRAGVSKRHL. Positions 88–104 are required for interaction with ADRB2; that stretch reads CEAINFLLSLIDRLVLY. The Fe2OG dioxygenase domain maps to 116-214; that stretch reads ERSKAMVACY…RYAMTVWYFD (99 aa). The Fe cation site is built by H135, D137, and H196. Position 205 (R205) interacts with 2-oxoglutarate.

Interacts with ADRB2; the interaction hydroxylates ADRB2 facilitating its ubiquitination by the VHL-E3 ligase complex. Interacts with PAX2; the interaction targets PAX2 for destruction. Interacts with PKM; the interaction hydroxylates PKM in hypoxia. Interacts with WDR83; the interaction leads to almost complete elimination of HIF-mediated reporter activity. Interacts with BCL2 (via its BH4 domain); the interaction disrupts the BAX-BCL4 complex inhibiting the anti-apoptotic activity of BCL2. Fe(2+) is required as a cofactor. Requires L-ascorbate as cofactor. In terms of processing, ubiquitinated by SIAH1 and/or SIAH2 in response to the unfolded protein response (UPR), leading to its degradation. In terms of tissue distribution, highly expressed in vascular smooth muscle. Moderately expressed in esophagus, stomach, small bowel and aorta. Low levels in tail and kidney. Expression also in pheochromocytoma cell line PC-12.

The protein resides in the nucleus. It is found in the cytoplasm. The catalysed reaction is L-prolyl-[protein] + 2-oxoglutarate + O2 = trans-4-hydroxy-L-prolyl-[protein] + succinate + CO2. It catalyses the reaction L-prolyl-[hypoxia-inducible factor alpha subunit] + 2-oxoglutarate + O2 = trans-4-hydroxy-L-prolyl-[hypoxia-inducible factor alpha subunit] + succinate + CO2. Its function is as follows. Prolyl hydroxylase that mediates hydroxylation of proline residues in target proteins, such as PKM, TELO2, ATF4 and HIF1A. Target proteins are preferentially recognized via a LXXLAP motif. Cellular oxygen sensor that catalyzes, under normoxic conditions, the post-translational formation of 4-hydroxyproline in hypoxia-inducible factor (HIF) alpha proteins. Hydroxylates a specific proline found in each of the oxygen-dependent degradation (ODD) domains (N-terminal, NODD, and C-terminal, CODD) of HIF1A. Also hydroxylates HIF2A. Has a preference for the CODD site for both HIF1A and HIF2A. Hydroxylation on the NODD site by EGLN3 appears to require prior hydroxylation on the CODD site. Hydroxylated HIFs are then targeted for proteasomal degradation via the von Hippel-Lindau ubiquitination complex. Under hypoxic conditions, the hydroxylation reaction is attenuated allowing HIFs to escape degradation resulting in their translocation to the nucleus, heterodimerization with HIF1B, and increased expression of hypoxy-inducible genes. ELGN3 is the most important isozyme in limiting physiological activation of HIFs (particularly HIF2A) in hypoxia. Also hydroxylates PKM in hypoxia, limiting glycolysis. Under normoxia, hydroxylates and regulates the stability of ADRB2. Regulator of cardiomyocyte and neuronal apoptosis. In cardiomyocytes, inhibits the anti-apoptotic effect of BCL2 by disrupting the BAX-BCL2 complex. In neurons, has a NGF-induced proapoptotic effect, probably through regulating CASP3 activity. Also essential for hypoxic regulation of neutrophilic inflammation. Plays a crucial role in DNA damage response (DDR) by hydroxylating TELO2, promoting its interaction with ATR which is required for activation of the ATR/CHK1/p53 pathway. Also mediates hydroxylation of ATF4, leading to decreased protein stability of ATF4. This is Prolyl hydroxylase EGLN3 (Egln3) from Rattus norvegicus (Rat).